The following is a 332-amino-acid chain: uncharacterized protein (332 aa).

A helical membrane pass occupies residues 27-47; it reads CAIVFLCVLLILPFLSCCTSL.

It localises to the membrane. This is an uncharacterized protein from Treponema pallidum (strain Nichols).